A 197-amino-acid chain; its full sequence is Imidazoleglycerol-phosphate dehydratase (197 aa).

It belongs to the imidazoleglycerol-phosphate dehydratase family.

It is found in the cytoplasm. The enzyme catalyses D-erythro-1-(imidazol-4-yl)glycerol 3-phosphate = 3-(imidazol-4-yl)-2-oxopropyl phosphate + H2O. Its pathway is amino-acid biosynthesis; L-histidine biosynthesis; L-histidine from 5-phospho-alpha-D-ribose 1-diphosphate: step 6/9. The protein is Imidazoleglycerol-phosphate dehydratase of Gloeobacter violaceus (strain ATCC 29082 / PCC 7421).